We begin with the raw amino-acid sequence, 122 residues long: WUSCHEL-related homeobox 7 (122 aa).

A DNA-binding region (homeobox; WUS-type) is located at residues 25–89; the sequence is AKCGRWNPTV…NHKARERQKC (65 aa). A compositionally biased stretch (basic and acidic residues) spans 98 to 111; sequence DHRQDTDLSKPRRD. Positions 98 to 122 are disordered; that stretch reads DHRQDTDLSKPRRDNVRRHQLPAKG. The span at 112–122 shows a compositional bias: basic residues; sequence NVRRHQLPAKG.

It belongs to the WUS homeobox family.

It is found in the nucleus. Functionally, potential transcription factor that plays a central role during developmental processes. The sequence is that of WUSCHEL-related homeobox 7 (WOX7) from Arabidopsis thaliana (Mouse-ear cress).